The following is a 238-amino-acid chain: Triosephosphate isomerase (238 aa).

7 to 9 contacts substrate; that stretch reads NFK. The active-site Electrophile is His-91. Glu-158 functions as the Proton acceptor in the catalytic mechanism. Positions 164 and 200 each coordinate substrate.

This sequence belongs to the triosephosphate isomerase family. In terms of assembly, homodimer.

The protein resides in the cytoplasm. The catalysed reaction is D-glyceraldehyde 3-phosphate = dihydroxyacetone phosphate. Its pathway is carbohydrate biosynthesis; gluconeogenesis. It participates in carbohydrate degradation; glycolysis; D-glyceraldehyde 3-phosphate from glycerone phosphate: step 1/1. Functionally, involved in the gluconeogenesis. Catalyzes stereospecifically the conversion of dihydroxyacetone phosphate (DHAP) to D-glyceraldehyde-3-phosphate (G3P). The protein is Triosephosphate isomerase of Ureaplasma parvum serovar 3 (strain ATCC 27815 / 27 / NCTC 11736).